The primary structure comprises 596 residues: Aspartate--tRNA(Asp/Asn) ligase (596 aa).

Glutamate 172 is an L-aspartate binding site. Residues 196-199 (QLFK) form an aspartate region. L-aspartate is bound at residue arginine 218. Residues 218–220 (RDE) and glutamine 227 contribute to the ATP site. Histidine 450 serves as a coordination point for L-aspartate. Glutamate 484 is an ATP binding site. Residue arginine 491 coordinates L-aspartate. ATP is bound at residue 536 to 539 (GLDR).

It belongs to the class-II aminoacyl-tRNA synthetase family. Type 1 subfamily. As to quaternary structure, homodimer.

It localises to the cytoplasm. The catalysed reaction is tRNA(Asx) + L-aspartate + ATP = L-aspartyl-tRNA(Asx) + AMP + diphosphate. Its function is as follows. Aspartyl-tRNA synthetase with relaxed tRNA specificity since it is able to aspartylate not only its cognate tRNA(Asp) but also tRNA(Asn). Reaction proceeds in two steps: L-aspartate is first activated by ATP to form Asp-AMP and then transferred to the acceptor end of tRNA(Asp/Asn). The chain is Aspartate--tRNA(Asp/Asn) ligase from Acidithiobacillus ferrooxidans (strain ATCC 23270 / DSM 14882 / CIP 104768 / NCIMB 8455) (Ferrobacillus ferrooxidans (strain ATCC 23270)).